A 598-amino-acid chain; its full sequence is IQ calmodulin-binding motif-containing protein 1 (598 aa).

The segment at 1-157 is interaction with BBS1, BBS8 and BBS9; sequence MKPAGTDPRI…SLFWLLGGHV (157 aa). The interval 287–598 is interaction with CEP290, BBS1, BBS2, BBS4, BBS5, BBS7, BBS8 and BBS9; that stretch reads QEVEEQKLHK…MLFIGGTKPP (312 aa). IQ domains follow at residues 294 to 317, 318 to 338, 387 to 416, and 417 to 437; these read LHKA…LKKL, PSAV…MMLE, EEKS…SLTE, and YKAA…CRKK. The stretch at 336 to 362 forms a coiled coil; sequence MLELNRQKEEEDLRLKLQLQRQRAMRL. The segment at 530-598 is interaction with BBS1, BBS2, BBS4, BBS7, BBS8 and BBS9; that stretch reads AEGKEPEQFL…MLFIGGTKPP (69 aa).

In terms of assembly, interacts with calmodulin. Interacts with CEP290/NPHP6; IQCB1/NPHP5 and CEP290/NPHP6; are proposed to form a functional NPHP5-6 module localized to the centrosome. Interacts with ATXN10. Interacts with NPHP1, INVS, NPHP4 and RPGRIP1L; these interactions likely require additional interactors. Associates with the BBSome complex; interacts with BBS1, BBS2, BBS4, BBS5, BBS7, BBS8 and BBS9. As to expression, localized to the outer segment and connecting cilia of photoreceptor cells.

It localises to the cytoplasm. The protein resides in the cytoskeleton. Its subcellular location is the microtubule organizing center. It is found in the centrosome. In terms of biological role, involved in ciliogenesis. The function in an early step in cilia formation depends on its association with CEP290/NPHP6. Involved in regulation of the BBSome complex integrity, specifically for presence of BBS2 and BBS5 in the complex, and in ciliary targeting of selected BBSome cargos. May play a role in controlling entry of the BBSome complex to cilia possibly implicating CEP290/NPHP6. The polypeptide is IQ calmodulin-binding motif-containing protein 1 (Iqcb1) (Mus musculus (Mouse)).